We begin with the raw amino-acid sequence, 88 residues long: UPF0495 protein DEHA2C16280g (88 aa).

The chain crosses the membrane as a helical span at residues 25–47 (YPLFAAMGVAVASGCFFTYRHFA).

Belongs to the UPF0495 family.

Its subcellular location is the membrane. This chain is UPF0495 protein DEHA2C16280g, found in Debaryomyces hansenii (strain ATCC 36239 / CBS 767 / BCRC 21394 / JCM 1990 / NBRC 0083 / IGC 2968) (Yeast).